Reading from the N-terminus, the 248-residue chain is Triosephosphate isomerase B (248 aa).

Positions 11 and 13 each coordinate substrate. The Electrophile role is filled by His95. Glu165 acts as the Proton acceptor in catalysis.

This sequence belongs to the triosephosphate isomerase family. As to quaternary structure, homodimer.

It is found in the cytoplasm. The catalysed reaction is dihydroxyacetone phosphate = methylglyoxal + phosphate. The enzyme catalyses D-glyceraldehyde 3-phosphate = dihydroxyacetone phosphate. The protein operates within carbohydrate degradation; glycolysis; D-glyceraldehyde 3-phosphate from glycerone phosphate: step 1/1. It participates in carbohydrate biosynthesis; gluconeogenesis. Its function is as follows. Triosephosphate isomerase is an extremely efficient metabolic enzyme that catalyzes the interconversion between dihydroxyacetone phosphate (DHAP) and D-glyceraldehyde-3-phosphate (G3P) in glycolysis and gluconeogenesis. It is also responsible for the non-negligible production of methylglyoxal a reactive cytotoxic side-product that modifies and can alter proteins, DNA and lipids. The sequence is that of Triosephosphate isomerase B (tpi1b) from Danio rerio (Zebrafish).